Here is a 77-residue protein sequence, read N- to C-terminus: Small ribosomal subunit protein bS18 (77 aa).

The protein belongs to the bacterial ribosomal protein bS18 family. Part of the 30S ribosomal subunit. Forms a tight heterodimer with protein bS6.

Functionally, binds as a heterodimer with protein bS6 to the central domain of the 16S rRNA, where it helps stabilize the platform of the 30S subunit. In Lactobacillus helveticus (strain DPC 4571), this protein is Small ribosomal subunit protein bS18.